We begin with the raw amino-acid sequence, 85 residues long: UPF0181 protein YPO1774/y2534/YP_1619 (85 aa).

Residues 50 to 85 (QAMAIFEDHDFDEHTESDYRRDDEPDADDIEDPYEG) are disordered. Residues 55-72 (FEDHDFDEHTESDYRRDD) show a composition bias toward basic and acidic residues. Over residues 73 to 85 (EPDADDIEDPYEG) the composition is skewed to acidic residues.

This sequence belongs to the UPF0181 family.

The polypeptide is UPF0181 protein YPO1774/y2534/YP_1619 (Yersinia pestis).